The primary structure comprises 184 residues: Envelope protein 169 (184 aa).

The Intravirion segment spans residues 1–6 (MKKYIK). Residues 7 to 27 (MYLVLLIAIILFITILVIFLI) form a helical membrane-spanning segment. Over 28 to 184 (SGLFYPEQNP…TVMAIPRKVL (157 aa)) the chain is Virion surface.

Belongs to the asfivirus envelope protein p22 family.

Its subcellular location is the virion membrane. It is found in the host cell membrane. The chain is Envelope protein 169 from Ornithodoros (relapsing fever ticks).